Reading from the N-terminus, the 446-residue chain is Glutamyl-tRNA reductase (446 aa).

Residues 49–52, serine 109, 114–116, and glutamine 120 each bind substrate; these read TCNR and ETQ. Cysteine 50 functions as the Nucleophile in the catalytic mechanism. 189–194 is a binding site for NADP(+); the sequence is GAGEMA.

Belongs to the glutamyl-tRNA reductase family. In terms of assembly, homodimer.

It carries out the reaction (S)-4-amino-5-oxopentanoate + tRNA(Glu) + NADP(+) = L-glutamyl-tRNA(Glu) + NADPH + H(+). The protein operates within porphyrin-containing compound metabolism; protoporphyrin-IX biosynthesis; 5-aminolevulinate from L-glutamyl-tRNA(Glu): step 1/2. Catalyzes the NADPH-dependent reduction of glutamyl-tRNA(Glu) to glutamate 1-semialdehyde (GSA). This Macrococcus caseolyticus (strain JCSC5402) (Macrococcoides caseolyticum) protein is Glutamyl-tRNA reductase.